The sequence spans 344 residues: Dihydroorotase (344 aa).

H13 and H15 together coordinate Zn(2+). Residues 15 to 17 (HLR) and N41 contribute to the substrate site. Zn(2+) contacts are provided by K98, H135, and H173. An N6-carboxylysine modification is found at K98. H135 lines the substrate pocket. L218 lines the substrate pocket. D247 serves as a coordination point for Zn(2+). Residue D247 is part of the active site. Residues H251 and A263 each contribute to the substrate site.

This sequence belongs to the metallo-dependent hydrolases superfamily. DHOase family. Class II DHOase subfamily. As to quaternary structure, homodimer. Zn(2+) serves as cofactor.

The catalysed reaction is (S)-dihydroorotate + H2O = N-carbamoyl-L-aspartate + H(+). It functions in the pathway pyrimidine metabolism; UMP biosynthesis via de novo pathway; (S)-dihydroorotate from bicarbonate: step 3/3. Functionally, catalyzes the reversible cyclization of carbamoyl aspartate to dihydroorotate. In Neisseria meningitidis serogroup C (strain 053442), this protein is Dihydroorotase.